Here is a 135-residue protein sequence, read N- to C-terminus: UPF0355 protein SH2586 (135 aa).

The segment at 105-135 (NSSHDEVEENNSAYEEIDITHYANESKGPKS) is disordered.

Belongs to the UPF0355 family.

This chain is UPF0355 protein SH2586, found in Staphylococcus haemolyticus (strain JCSC1435).